The chain runs to 248 residues: 7-cyano-7-deazaguanine synthase (248 aa).

Residue 22 to 32 coordinates ATP; that stretch reads LSGGLDSTTCL. Positions 216, 225, 228, and 231 each coordinate Zn(2+).

The protein belongs to the QueC family. The cofactor is Zn(2+).

The enzyme catalyses 7-carboxy-7-deazaguanine + NH4(+) + ATP = 7-cyano-7-deazaguanine + ADP + phosphate + H2O + H(+). The protein operates within purine metabolism; 7-cyano-7-deazaguanine biosynthesis. Catalyzes the ATP-dependent conversion of 7-carboxy-7-deazaguanine (CDG) to 7-cyano-7-deazaguanine (preQ(0)). The polypeptide is 7-cyano-7-deazaguanine synthase (Leptospira biflexa serovar Patoc (strain Patoc 1 / Ames)).